We begin with the raw amino-acid sequence, 1106 residues long: Putative pre-mRNA-splicing factor ATP-dependent RNA helicase DHX16 (1106 aa).

3 disordered regions span residues 73 to 100 (KIQNITSSSSSSSSTSLSSSSSSKDKEK), 120 to 286 (DDIV…TKSR), and 366 to 394 (YINDNKNKKGNDSSSSSSYNPEQKEWEQN). A compositionally biased stretch (low complexity) spans 78–94 (TSSSSSSSSTSLSSSSS). Residues 138–155 (KRKKKEKKKEKKDKKDKK) are compositionally biased toward basic residues. Positions 156 to 167 (DKKSSTRKKSDN) are enriched in basic and acidic residues. A compositionally biased stretch (low complexity) spans 189-201 (NNENNDNNNDNNN). Over residues 232 to 283 (REQREVKELSDRIKKRDEKSTKKKIVDDSETKESIERKNRLEQNEQLETERT) the composition is skewed to basic and acidic residues. Positions 477-640 (IDAVREYQVL…FDGAPTFNIP (164 aa)) constitute a Helicase ATP-binding domain. 490–497 (GETGSGKT) contributes to the ATP binding site. Residues 587–590 (DEAH) carry the DEAH box motif. Positions 665 to 838 (TVLQIHITEP…NVVLLLKSMG (174 aa)) constitute a Helicase C-terminal domain.

The protein belongs to the DEAD box helicase family. DEAH subfamily. DDX16/PRP8 sub-subfamily. In terms of assembly, component of pre-catalytic spliceosome complexes.

The protein resides in the nucleus. It localises to the nucleoplasm. The enzyme catalyses ATP + H2O = ADP + phosphate + H(+). Required for pre-mRNA splicing as component of the spliceosome. Contributes to pre-mRNA splicing after spliceosome formation and prior to the first transesterification reaction. This chain is Putative pre-mRNA-splicing factor ATP-dependent RNA helicase DHX16 (dhx16), found in Dictyostelium discoideum (Social amoeba).